Consider the following 1358-residue polypeptide: DNA-directed RNA polymerase subunit beta (1358 aa).

Belongs to the RNA polymerase beta chain family. In terms of assembly, the RNAP catalytic core consists of 2 alpha, 1 beta, 1 beta' and 1 omega subunit. When a sigma factor is associated with the core the holoenzyme is formed, which can initiate transcription.

It catalyses the reaction RNA(n) + a ribonucleoside 5'-triphosphate = RNA(n+1) + diphosphate. Functionally, DNA-dependent RNA polymerase catalyzes the transcription of DNA into RNA using the four ribonucleoside triphosphates as substrates. The protein is DNA-directed RNA polymerase subunit beta of Neorickettsia sennetsu (strain ATCC VR-367 / Miyayama) (Ehrlichia sennetsu).